Here is a 204-residue protein sequence, read N- to C-terminus: Pyridoxal 5'-phosphate synthase subunit PdxT (204 aa).

52–54 (GES) is an L-glutamine binding site. Cysteine 84 acts as the Nucleophile in catalysis. L-glutamine is bound by residues arginine 116 and 143–144 (IR). Catalysis depends on charge relay system residues histidine 184 and glutamate 186.

The protein belongs to the glutaminase PdxT/SNO family. In the presence of PdxS, forms a dodecamer of heterodimers. Only shows activity in the heterodimer.

The enzyme catalyses aldehydo-D-ribose 5-phosphate + D-glyceraldehyde 3-phosphate + L-glutamine = pyridoxal 5'-phosphate + L-glutamate + phosphate + 3 H2O + H(+). The catalysed reaction is L-glutamine + H2O = L-glutamate + NH4(+). It participates in cofactor biosynthesis; pyridoxal 5'-phosphate biosynthesis. Functionally, catalyzes the hydrolysis of glutamine to glutamate and ammonia as part of the biosynthesis of pyridoxal 5'-phosphate. The resulting ammonia molecule is channeled to the active site of PdxS. The protein is Pyridoxal 5'-phosphate synthase subunit PdxT of Pyrobaculum arsenaticum (strain DSM 13514 / JCM 11321 / PZ6).